The sequence spans 211 residues: Ribosomal RNA small subunit methyltransferase G (211 aa).

S-adenosyl-L-methionine is bound by residues glycine 73, phenylalanine 78, 124–125 (VE), and arginine 137.

It belongs to the methyltransferase superfamily. RNA methyltransferase RsmG family.

Its subcellular location is the cytoplasm. Its function is as follows. Specifically methylates the N7 position of a guanine in 16S rRNA. The polypeptide is Ribosomal RNA small subunit methyltransferase G (Christiangramia forsetii (strain DSM 17595 / CGMCC 1.15422 / KT0803) (Gramella forsetii)).